The chain runs to 652 residues: Acetyl-coenzyme A synthetase (652 aa).

Residues 191–194 (RAGR), T311, and N335 each bind CoA. ATP contacts are provided by residues 387–389 (GEP), 411–416 (DTWWQT), D500, and R515. S523 provides a ligand contact to CoA. R526 contributes to the ATP binding site. 3 residues coordinate Mg(2+): V537, H539, and I542. R584 serves as a coordination point for CoA. An N6-acetyllysine; by autocatalysis modification is found at K609.

It belongs to the ATP-dependent AMP-binding enzyme family. In terms of assembly, forms a 1:1 complex with CobB/NAD-dependent deacetylase. The cofactor is Mg(2+). In terms of processing, autoacetylated. Deacetylation by CobB activates the enzyme.

It carries out the reaction acetate + ATP + CoA = acetyl-CoA + AMP + diphosphate. Its function is as follows. Catalyzes the conversion of acetate into acetyl-CoA (AcCoA), an essential intermediate at the junction of anabolic and catabolic pathways. Acs undergoes a two-step reaction. In the first half reaction, Acs combines acetate with ATP to form acetyl-adenylate (AcAMP) intermediate. In the second half reaction, it can then transfer the acetyl group from AcAMP to the sulfhydryl group of CoA, forming the product AcCoA. Enables the cell to use acetate during aerobic growth to generate energy via the TCA cycle, and biosynthetic compounds via the glyoxylate shunt. Acetylates CheY, the response regulator involved in flagellar movement and chemotaxis. The chain is Acetyl-coenzyme A synthetase from Escherichia coli (strain K12).